Consider the following 448-residue polypeptide: Probable metal transport system membrane protein CPn_0347/CP_0413/CPj0347/CpB0354 (448 aa).

The next 8 helical transmembrane spans lie at 15–35 (FLAVTLICMTTALWGTILLIS), 47–67 (ASYPGLLVGALMAQYVFSLQA), 69–89 (IFWIVLFGCAASVFGYGIIVF), 100–120 (SALCFVLVVFFAIGVILASYV), 144–164 (FLEATLAAIVFCASLFALWWW), 193–213 (LIFISLVIVSGVRSVGIVLIS), 233–253 (ILILSAFFGGISGALGSYISV), and 270–290 (LPTGPLVVICAGLLAGLCLLF).

This sequence belongs to the ABC-3 integral membrane protein family.

The protein resides in the cell inner membrane. Part of an ATP-driven transport system CPn_0346/CPn_0347/CPn_0348/CPn_0349 for a metal. The sequence is that of Probable metal transport system membrane protein CPn_0347/CP_0413/CPj0347/CpB0354 from Chlamydia pneumoniae (Chlamydophila pneumoniae).